Consider the following 150-residue polypeptide: Aspartate 1-decarboxylase 1 (150 aa).

Ser24 serves as the catalytic Schiff-base intermediate with substrate; via pyruvic acid. Ser24 carries the post-translational modification Pyruvic acid (Ser). Residue Thr56 participates in substrate binding. The Proton donor role is filled by Tyr57. Position 72-74 (72-74) interacts with substrate; sequence GAA.

This sequence belongs to the PanD family. In terms of assembly, heterooctamer of four alpha and four beta subunits. Requires pyruvate as cofactor. In terms of processing, is synthesized initially as an inactive proenzyme, which is activated by self-cleavage at a specific serine bond to produce a beta-subunit with a hydroxyl group at its C-terminus and an alpha-subunit with a pyruvoyl group at its N-terminus.

It localises to the cytoplasm. The enzyme catalyses L-aspartate + H(+) = beta-alanine + CO2. Its pathway is cofactor biosynthesis; (R)-pantothenate biosynthesis; beta-alanine from L-aspartate: step 1/1. Functionally, catalyzes the pyruvoyl-dependent decarboxylation of aspartate to produce beta-alanine. This chain is Aspartate 1-decarboxylase 1, found in Mesorhizobium japonicum (strain LMG 29417 / CECT 9101 / MAFF 303099) (Mesorhizobium loti (strain MAFF 303099)).